A 166-amino-acid chain; its full sequence is Mitochondrial inner membrane protease subunit 1 (166 aa).

Active-site residues include Ser40 and Lys83.

The protein belongs to the peptidase S26 family. IMP1 subfamily. As to quaternary structure, heterodimer of 2 subunits, IMMPL1 and IMMPL2.

Its subcellular location is the mitochondrion inner membrane. In terms of biological role, catalyzes the removal of transit peptides required for the targeting of proteins from the mitochondrial matrix, across the inner membrane, into the inter-membrane space. Known to process the nuclear encoded protein DIABLO. The protein is Mitochondrial inner membrane protease subunit 1 (IMMP1L) of Homo sapiens (Human).